Consider the following 580-residue polypeptide: Tyrosyl-DNA phosphodiesterase 1 (580 aa).

A disordered region spans residues 65-117; sequence ATNKEQEAHSSSSKPAVTAPVASGSSSSGSLDTNPSGSSASGPAASQDTSNLA. Residues 87–110 show a composition bias toward low complexity; it reads SGSSSSGSLDTNPSGSSASGPAAS. H248 serves as the catalytic Nucleophile. K250 provides a ligand contact to substrate. The interaction with DNA stretch occupies residues 387-390; the sequence is SIGS. H479 acts as the Proton donor/acceptor in catalysis. K481 is a substrate binding site.

Belongs to the tyrosyl-DNA phosphodiesterase family. As to expression, expressed in the body and at higher levels in the head. Expressed in the delaminating neuroblasts and a few ganglion mother cells in stage 11-14 embryonic central nervous system. Weak expression is seen in gonads at stage 16. Expressed in the brain; expression is regulated by DIP2.

It localises to the nucleus. It is found in the cytoplasm. Functionally, DNA repair enzyme that can remove a variety of covalent adducts from DNA through hydrolysis of a 3'-phosphodiester bond, giving rise to DNA with a free 3' phosphate. Catalyzes the hydrolysis of dead-end complexes between DNA and the topoisomerase I active site tyrosine residue. Hydrolyzes 3'-phosphoglycolates on protruding 3' ends on DNA double-strand breaks due to DNA damage by radiation and free radicals. Acts on blunt-ended double-strand DNA breaks and on single-stranded DNA. May have low 3'exonuclease activity and may be able to remove a single nucleoside from the 3'end of DNA and RNA molecules with 3'hydroxyl groups. Has no exonuclease activity towards DNA or RNA with a 3'phosphate. Required for normal polarization of epidermal cells, correct subcellular location of the Crb complex to the apical lateral membrane, and for normal neuronal development during embryonic development. Contributes to maintenance of epithelial cells in response to topoisomerase-1-mediated and oxidative DNA damage. Required for precise axonal bifurcation in mushroom body neurons. Required for maintenance of normal neuronal function. This Drosophila melanogaster (Fruit fly) protein is Tyrosyl-DNA phosphodiesterase 1.